The sequence spans 194 residues: ATP-dependent Clp protease proteolytic subunit (194 aa).

Serine 97 serves as the catalytic Nucleophile. The active site involves histidine 122.

The protein belongs to the peptidase S14 family. In terms of assembly, fourteen ClpP subunits assemble into 2 heptameric rings which stack back to back to give a disk-like structure with a central cavity, resembling the structure of eukaryotic proteasomes.

The protein resides in the cytoplasm. It catalyses the reaction Hydrolysis of proteins to small peptides in the presence of ATP and magnesium. alpha-casein is the usual test substrate. In the absence of ATP, only oligopeptides shorter than five residues are hydrolyzed (such as succinyl-Leu-Tyr-|-NHMec, and Leu-Tyr-Leu-|-Tyr-Trp, in which cleavage of the -Tyr-|-Leu- and -Tyr-|-Trp bonds also occurs).. Cleaves peptides in various proteins in a process that requires ATP hydrolysis. Has a chymotrypsin-like activity. Plays a major role in the degradation of misfolded proteins. In Thermus thermophilus (strain ATCC BAA-163 / DSM 7039 / HB27), this protein is ATP-dependent Clp protease proteolytic subunit.